A 180-amino-acid chain; its full sequence is Inosine/xanthosine triphosphatase (180 aa).

A substrate-binding site is contributed by 8 to 13 (TTNPAK). Residues Asp-38 and Glu-68 each contribute to the Mg(2+) site. 68–69 (EA) serves as a coordination point for substrate.

This sequence belongs to the YjjX NTPase family. In terms of assembly, homodimer. The cofactor is Mg(2+). Mn(2+) is required as a cofactor.

The enzyme catalyses XTP + H2O = XDP + phosphate + H(+). It catalyses the reaction ITP + H2O = IDP + phosphate + H(+). Functionally, phosphatase that hydrolyzes non-canonical purine nucleotides such as XTP and ITP to their respective diphosphate derivatives. Probably excludes non-canonical purines from DNA/RNA precursor pool, thus preventing their incorporation into DNA/RNA and avoiding chromosomal lesions. The protein is Inosine/xanthosine triphosphatase of Yersinia pestis bv. Antiqua (strain Antiqua).